An 878-amino-acid chain; its full sequence is Aconitase htyD (878 aa).

Substrate-binding positions include glutamine 173 and 290–292 (DSH). Positions 472, 535, and 538 each coordinate [4Fe-4S] cluster. Arginine 558 and arginine 563 together coordinate substrate. Positions 626–671 (IAIANQRTKPAPTMPAYVEPYRSFQPPVPPSSDQPQSMKDHGKTSN) are disordered. 742-743 (SR) provides a ligand contact to substrate.

The protein belongs to the aconitase/IPM isomerase family.

The protein operates within antifungal biosynthesis. In terms of biological role, aconitase; part of the gene cluster that mediates the de novo generation of L-homotyrosine from acetyl-CoA and 4-hydroxyphenyl-pyruvate. L-homotyrosine is a building block of echinocandin B, a fungal lipidated cyclic hexapeptide that acts as an antifungal agent. L-homotyrosine 4-hydroxyphenyl-pyruvate first undergoes an aldol-type condensation by htyA with the C-2 of acetyl-CoA followed by the release of CoA to form 2-(4-hydroxybenzyl)-malate. This is followed by isomerization of 2-(4-hydroxy-benzyl)-malate to 3-(4-hydroxybenzyl)-malate by htyD. Thereafter, 3-(4-hydroxybenzyl)-malate undergoes decarboxylation and oxidation to form 2-oxo-4-(4-hydroxybenzyl)butanoic acid, coupled to reduction of NAD(+) to NADH by htyC. The product then undergoes transamination catalyzed by htyB to form L-homotyrosine. In Aspergillus rugulosus (Emericella rugulosa), this protein is Aconitase htyD.